A 1051-amino-acid chain; its full sequence is Carbamoyl phosphate synthase large chain (1051 aa).

The interval 1 to 399 (MKETPKKVLV…SLQKAVRMLD (399 aa)) is carboxyphosphate synthetic domain. Residues arginine 127, arginine 167, glycine 173, glycine 174, lysine 206, leucine 208, glutamate 213, glycine 239, valine 240, histidine 241, glutamine 282, and glutamate 296 each contribute to the ATP site. One can recognise an ATP-grasp 1 domain in the interval 131–325 (RETMIENNLP…LAYVSAKLAL (195 aa)). The Mg(2+) site is built by glutamine 282, glutamate 296, and asparagine 298. The Mn(2+) site is built by glutamine 282, glutamate 296, and asparagine 298. The oligomerization domain stretch occupies residues 400-548 (IGEPGVVGGK…LTYNGTEDDL (149 aa)). Positions 549–930 (EFSQGNKLLI…LKSWLSSIPN (382 aa)) are carbamoyl phosphate synthetic domain. One can recognise an ATP-grasp 2 domain in the interval 673–863 (SKLLDKLGIS…LINEAMKAIF (191 aa)). Residues arginine 709, lysine 748, isoleucine 750, glutamate 755, glycine 779, valine 780, histidine 781, serine 782, glutamine 822, and glutamate 834 each contribute to the ATP site. Residues glutamine 822, glutamate 834, and asparagine 836 each contribute to the Mg(2+) site. 3 residues coordinate Mn(2+): glutamine 822, glutamate 834, and asparagine 836. Residues 930-1051 (NRIPNKNGIA…FEISEYGGGI (122 aa)) enclose the MGS-like domain. The segment at 931–1051 (RIPNKNGIAL…FEISEYGGGI (121 aa)) is allosteric domain.

Belongs to the CarB family. In terms of assembly, composed of two chains; the small (or glutamine) chain promotes the hydrolysis of glutamine to ammonia, which is used by the large (or ammonia) chain to synthesize carbamoyl phosphate. Tetramer of heterodimers (alpha,beta)4. Mg(2+) is required as a cofactor. Requires Mn(2+) as cofactor.

The catalysed reaction is hydrogencarbonate + L-glutamine + 2 ATP + H2O = carbamoyl phosphate + L-glutamate + 2 ADP + phosphate + 2 H(+). The enzyme catalyses hydrogencarbonate + NH4(+) + 2 ATP = carbamoyl phosphate + 2 ADP + phosphate + 2 H(+). It participates in amino-acid biosynthesis; L-arginine biosynthesis; carbamoyl phosphate from bicarbonate: step 1/1. Its pathway is pyrimidine metabolism; UMP biosynthesis via de novo pathway; (S)-dihydroorotate from bicarbonate: step 1/3. Functionally, large subunit of the glutamine-dependent carbamoyl phosphate synthetase (CPSase). CPSase catalyzes the formation of carbamoyl phosphate from the ammonia moiety of glutamine, carbonate, and phosphate donated by ATP, constituting the first step of 2 biosynthetic pathways, one leading to arginine and/or urea and the other to pyrimidine nucleotides. The large subunit (synthetase) binds the substrates ammonia (free or transferred from glutamine from the small subunit), hydrogencarbonate and ATP and carries out an ATP-coupled ligase reaction, activating hydrogencarbonate by forming carboxy phosphate which reacts with ammonia to form carbamoyl phosphate. The protein is Carbamoyl phosphate synthase large chain of Saccharolobus islandicus (strain L.S.2.15 / Lassen #1) (Sulfolobus islandicus).